Here is a 53-residue protein sequence, read N- to C-terminus: Lupus La protein homolog (53 aa).

The segment covering 1-13 (GKVEFQGKKTKFD) has biased composition (basic and acidic residues). Positions 1 to 53 (GKVEFQGKKTKFDSDDERNENGAAGPVKRAREETDKEEPASKQQKTENGAGDQ) are disordered. Position 8 is an N6-acetyllysine (Lys-8). Position 10 is a phosphothreonine (Thr-10). Ser-14 is modified (phosphoserine). Basic and acidic residues predominate over residues 29-40 (RAREETDKEEPA).

In terms of assembly, interacts with DDX15. May interact with RUFY1. In terms of processing, phosphorylated.

Its subcellular location is the nucleus. Binds to the 3' poly(U) terminus of nascent RNA polymerase III transcripts, protecting them from exonuclease digestion and facilitating their folding and maturation. The chain is Lupus La protein homolog (SSB) from Oryctolagus cuniculus (Rabbit).